A 476-amino-acid chain; its full sequence is Endonuclease SceI small subunit (476 aa).

This sequence belongs to the LAGLIDADG endonuclease family. In terms of assembly, endonuclease SceI (Endo.SceI) is a heterodimer of ENS2 and SSC1. Post-translationally, the N-terminus is blocked.

The protein localises to the mitochondrion. Catalytic component of endonuclease SceI (Endo.SceI), which cleaves specifically at multiple sites on mitochondrial DNA and produces double-stranded breaks. The chain is Endonuclease SceI small subunit (ENS2) from Saccharomyces cerevisiae (Baker's yeast).